Reading from the N-terminus, the 463-residue chain is NADH-quinone oxidoreductase subunit N (463 aa).

14 consecutive transmembrane segments (helical) span residues 5-25 (LLYGLLPEHILLGLILVLMLL), 34-54 (AGSALFIASLLAGAGVLVMQL), 72-92 (FSEIGRLIIVSCGAILGVYSL), 99-119 (KYWILIASSLLGAMIILDSAG), 120-140 (FISLFMGIEILSLPGFALMVL), 154-174 (YLLLSSVATALVLFGLSLVYG), 196-216 (LAASVMILSGFFLKASVFPFH), 230-250 (VTAFLASIVKAAVVLGLVRIL), 259-279 (AVTVIALLSMLSMFYGNITAI), 286-303 (KMLAYSSISHAGYMMFAL), 314-334 (LLYYVAVYAVTTITACACFSI), 356-376 (AILLSLCVLSLAGIPPLPGFL), 393-413 (VAVLAFVASYIGTFFYLGVVL), and 432-452 (LCWTWGGALLGTLALALFMLL).

Belongs to the complex I subunit 2 family. In terms of assembly, NDH-1 is composed of 14 different subunits. Subunits NuoA, H, J, K, L, M, N constitute the membrane sector of the complex.

It localises to the cell inner membrane. It catalyses the reaction a quinone + NADH + 5 H(+)(in) = a quinol + NAD(+) + 4 H(+)(out). Its function is as follows. NDH-1 shuttles electrons from NADH, via FMN and iron-sulfur (Fe-S) centers, to quinones in the respiratory chain. The immediate electron acceptor for the enzyme in this species is believed to be ubiquinone. Couples the redox reaction to proton translocation (for every two electrons transferred, four hydrogen ions are translocated across the cytoplasmic membrane), and thus conserves the redox energy in a proton gradient. This chain is NADH-quinone oxidoreductase subunit N, found in Pelobacter propionicus (strain DSM 2379 / NBRC 103807 / OttBd1).